Reading from the N-terminus, the 564-residue chain is uncharacterized protein (564 aa).

Residues 1–21 (MRRIGAITALSLPVLLSLLYS) form the signal peptide. Residue Cys22 is the site of N-palmitoyl cysteine attachment. A lipid anchor (S-diacylglycerol cysteine) is attached at Cys22.

The protein resides in the cell membrane. This is an uncharacterized protein from Aquifex aeolicus (strain VF5).